The chain runs to 131 residues: Sirohydrochlorin cobaltochelatase (131 aa).

His-12 functions as the Proton acceptor in the catalytic mechanism. Co(2+)-binding residues include His-12 and His-78. Residues His-12 and His-78 each contribute to the Ni(2+) site. Substrate is bound at residue 73 to 78 (LASGVH).

This sequence belongs to the CbiX family. CbiXS subfamily. Homotetramer; dimer of dimers.

The enzyme catalyses Co-sirohydrochlorin + 2 H(+) = sirohydrochlorin + Co(2+). The catalysed reaction is Ni-sirohydrochlorin + 2 H(+) = sirohydrochlorin + Ni(2+). It functions in the pathway cofactor biosynthesis; adenosylcobalamin biosynthesis; cob(II)yrinate a,c-diamide from sirohydrochlorin (anaerobic route): step 1/10. In terms of biological role, catalyzes the insertion of Co(2+) into sirohydrochlorin as part of the anaerobic pathway to cobalamin biosynthesis. Involved in the biosynthesis of the unique nickel-containing tetrapyrrole coenzyme F430, the prosthetic group of methyl-coenzyme M reductase (MCR), which plays a key role in methanogenesis and anaerobic methane oxidation. Catalyzes the insertion of Ni(2+) into sirohydrochlorin to yield Ni-sirohydrochlorin. The sequence is that of Sirohydrochlorin cobaltochelatase from Methanococcoides burtonii (strain DSM 6242 / NBRC 107633 / OCM 468 / ACE-M).